The sequence spans 648 residues: Leucine-rich repeat and WD repeat-containing protein 1 (648 aa).

LRR repeat units follow at residues Lys22–Leu43, Lys48–Ser69, His70–Pro91, and Glu92–Ser113. The tract at residues Val214 to Gly262 is disordered. The span at Arg226 to Lys237 shows a compositional bias: basic and acidic residues. Ser259 is modified (phosphoserine). 5 WD repeats span residues Ala392–Lys432, Cys443–Gln482, Val497–Gly536, Leu541–Pro592, and Val616–Cys648.

The protein belongs to the LRWD1 family. In terms of assembly, integral component of the ORC complex. Directly interacts with CDT1, GMNN and ORC2. Interacts with ORC2 only when non-ubiquitinated; this interaction prevents LRWD1 ubiquitination and degradation. Some of these interactions are regulated in a cell-cycle dependent manner. Interaction with ORC1 occurs predominantly during G1. Association with phosphorylated ORC1 during mitosis is not efficient. Interaction with CDT1 occurs during G1 phase, as well as during mitosis with phosphorylated CDT1. Interaction with GMNN occurs from G1/S to mitosis. Interaction with ORC2 is observed throughout the cell cycle. The stoichiometry of the ORCA/ORC/CDT1/GMNN complex is 1:1:1:2. Interacts with CUL4A and DDB1; this interaction may lead to ubiquitination. Post-translationally, ubiquitinated; undergoes 'Lys-48'-linked polyubiquitination leading to proteasomal degradation. Ubiquitination occurs within the WD repeats at the end of the G1 phase. Ubiquitination may be catalyzed by the CUL4-DDB1 E3 ubiquitin-protein ligase complex and other E3 ligases. As to expression, testis-specific.

It is found in the nucleus. The protein resides in the chromosome. It localises to the centromere. Its subcellular location is the telomere. The protein localises to the cytoplasm. It is found in the cytoskeleton. The protein resides in the microtubule organizing center. It localises to the centrosome. Its subcellular location is the kinetochore. Required for G1/S transition. Recruits and stabilizes the origin recognition complex (ORC) onto chromatin during G1 to establish pre-replication complex (preRC) and to heterochromatic sites in post-replicated cells. Binds a combination of DNA and histone methylation repressive marks on heterochromatin. Binds histone H3 and H4 trimethylation marks H3K9me3, H3K27me3 and H4K20me3 in a cooperative manner with DNA methylation. Required for silencing of major satellite repeats. May be important ORC2, ORC3 and ORC4 stability. This Mus musculus (Mouse) protein is Leucine-rich repeat and WD repeat-containing protein 1 (LRWD1).